Reading from the N-terminus, the 106-residue chain is UPF0213 protein KPN78578_35340 (106 aa).

In terms of domain architecture, GIY-YIG spans 13–88 (VCWFLYLIRT…KQLTKREKER (76 aa)).

The protein belongs to the UPF0213 family.

The sequence is that of UPF0213 protein KPN78578_35340 from Klebsiella pneumoniae subsp. pneumoniae (strain ATCC 700721 / MGH 78578).